We begin with the raw amino-acid sequence, 346 residues long: Ribonucleoside-diphosphate reductase subunit beta (346 aa).

Fe cation is bound by residues glutamate 89, glutamate 120, and histidine 123. Tyrosine 129 is an active-site residue. Fe cation-binding residues include glutamate 193, glutamate 227, and histidine 230.

Belongs to the ribonucleoside diphosphate reductase small chain family. Tetramer of two alpha and two beta subunits. Requires Fe cation as cofactor.

It catalyses the reaction a 2'-deoxyribonucleoside 5'-diphosphate + [thioredoxin]-disulfide + H2O = a ribonucleoside 5'-diphosphate + [thioredoxin]-dithiol. In terms of biological role, provides the precursors necessary for DNA synthesis. Catalyzes the biosynthesis of deoxyribonucleotides from the corresponding ribonucleotides. The protein is Ribonucleoside-diphosphate reductase subunit beta (nrdB) of Chlamydia pneumoniae (Chlamydophila pneumoniae).